A 180-amino-acid chain; its full sequence is 3-hydroxyanthranilate 3,4-dioxygenase (180 aa).

Position 44 (Arg44) interacts with O2. Residues His48, Glu54, and His92 each contribute to the Fe cation site. Glu54 lines the substrate pocket. The substrate site is built by Arg96 and Glu106. A divalent metal cation-binding residues include Cys121, Cys124, Cys158, and Cys161.

The protein belongs to the 3-HAO family. The cofactor is Fe(2+).

Its subcellular location is the cytoplasm. It catalyses the reaction 3-hydroxyanthranilate + O2 = (2Z,4Z)-2-amino-3-carboxymuconate 6-semialdehyde. It functions in the pathway cofactor biosynthesis; NAD(+) biosynthesis; quinolinate from L-kynurenine: step 3/3. In terms of biological role, catalyzes the oxidative ring opening of 3-hydroxyanthranilate to 2-amino-3-carboxymuconate semialdehyde, which spontaneously cyclizes to quinolinate. The sequence is that of 3-hydroxyanthranilate 3,4-dioxygenase (bna1) from Neurospora crassa (strain ATCC 24698 / 74-OR23-1A / CBS 708.71 / DSM 1257 / FGSC 987).